The following is a 271-amino-acid chain: Zinc finger protein 501 (271 aa).

9 C2H2-type zinc fingers span residues 22–44 (SKCS…QRIH), 50–72 (YVCS…LRIH), 78–100 (YKCN…LRIH), 106–128 (YKCN…QRIH), 134–156 (YKCA…QRSH), 162–184 (FKCN…QRIH), 190–212 (YTCT…ERTH), 218–240 (YKCS…YRIH), and 246–268 (YECF…QRLH).

This sequence belongs to the krueppel C2H2-type zinc-finger protein family.

The protein resides in the nucleus. It is found in the nucleolus. Functionally, may be involved in transcriptional regulation. Essential for Golgi structural integrity. The chain is Zinc finger protein 501 (ZNF501) from Pongo abelii (Sumatran orangutan).